Consider the following 413-residue polypeptide: Isobutyryl-CoA dehydrogenase, mitochondrial (413 aa).

The transit peptide at 1–20 (MAMLRSGYRRFGCLRAALKS) directs the protein to the mitochondrion. An N6-acetyllysine; alternate modification is found at lysine 48. An N6-succinyllysine; alternate modification is found at lysine 48. Residues 156 to 165 (YCLTEPGSGS) and 189 to 191 (FIS) each bind FAD. Serine 165 lines the substrate pocket. Lysine 211 is subject to N6-succinyllysine. At lysine 229 the chain carries N6-acetyllysine. Position 269 is an N6-succinyllysine (lysine 269). Residue 272–275 (NGGR) participates in substrate binding. Residues arginine 300, 310–311 (SQ), and 369–373 (QMHGG) contribute to the FAD site. Glutamate 396 acts as the Proton acceptor in catalysis. 398–400 (SNE) contacts FAD. Position 408 (arginine 408) interacts with substrate.

The protein belongs to the acyl-CoA dehydrogenase family. As to quaternary structure, homotetramer, formed by a dimer of dimers. FAD is required as a cofactor.

The protein localises to the mitochondrion. The enzyme catalyses 2-methylpropanoyl-CoA + oxidized [electron-transfer flavoprotein] + H(+) = 2-methylpropenoyl-CoA + reduced [electron-transfer flavoprotein]. It carries out the reaction (2S)-2-methylbutanoyl-CoA + oxidized [electron-transfer flavoprotein] + H(+) = (2E)-2-methylbut-2-enoyl-CoA + reduced [electron-transfer flavoprotein]. The catalysed reaction is propanoyl-CoA + oxidized [electron-transfer flavoprotein] + H(+) = acryloyl-CoA + reduced [electron-transfer flavoprotein]. The protein operates within amino-acid degradation; L-valine degradation. Functionally, isobutyryl-CoA dehydrogenase which catalyzes the conversion of 2-methylpropanoyl-CoA to (2E)-2-methylpropenoyl-CoA in the valine catabolic pathway. To a lesser extent, also able to catalyze the oxidation of (2S)-2-methylbutanoyl-CoA. The polypeptide is Isobutyryl-CoA dehydrogenase, mitochondrial (Mus musculus (Mouse)).